The primary structure comprises 120 residues: UPF0344 protein BCAH187_A1308 (120 aa).

Helical transmembrane passes span 6–26, 32–52, 64–84, and 91–111; these read ITAW…YSAG, VHMG…WLYL, WYGL…MVLV, and ATGA…YLGL.

It belongs to the UPF0344 family.

It is found in the cell membrane. The protein is UPF0344 protein BCAH187_A1308 of Bacillus cereus (strain AH187).